The primary structure comprises 99 residues: Protein translation factor SUI1 homolog (99 aa).

It belongs to the SUI1 family.

The protein is Protein translation factor SUI1 homolog of Pyrococcus horikoshii (strain ATCC 700860 / DSM 12428 / JCM 9974 / NBRC 100139 / OT-3).